The following is a 338-amino-acid chain: Holliday junction branch migration complex subunit RuvB (338 aa).

The tract at residues 1 to 180 is large ATPase domain (RuvB-L); the sequence is MTRLVTPDIT…FGVISRLEFY (180 aa). Residues Leu-19, Arg-20, Gly-61, Lys-64, Thr-65, Thr-66, 127-129, Arg-170, Tyr-180, and Arg-217 each bind ATP; that span reads EDY. Thr-65 lines the Mg(2+) pocket. The small ATPAse domain (RuvB-S) stretch occupies residues 181–251; sequence TDDELTTIVT…VVDESLKLLE (71 aa). The head domain (RuvB-H) stretch occupies residues 254–338; sequence EKGFDHMDRT…PPSSSQGNLF (85 aa). Arg-290, Arg-309, and Arg-314 together coordinate DNA.

Belongs to the RuvB family. Homohexamer. Forms an RuvA(8)-RuvB(12)-Holliday junction (HJ) complex. HJ DNA is sandwiched between 2 RuvA tetramers; dsDNA enters through RuvA and exits via RuvB. An RuvB hexamer assembles on each DNA strand where it exits the tetramer. Each RuvB hexamer is contacted by two RuvA subunits (via domain III) on 2 adjacent RuvB subunits; this complex drives branch migration. In the full resolvosome a probable DNA-RuvA(4)-RuvB(12)-RuvC(2) complex forms which resolves the HJ.

It localises to the cytoplasm. It catalyses the reaction ATP + H2O = ADP + phosphate + H(+). Its function is as follows. The RuvA-RuvB-RuvC complex processes Holliday junction (HJ) DNA during genetic recombination and DNA repair, while the RuvA-RuvB complex plays an important role in the rescue of blocked DNA replication forks via replication fork reversal (RFR). RuvA specifically binds to HJ cruciform DNA, conferring on it an open structure. The RuvB hexamer acts as an ATP-dependent pump, pulling dsDNA into and through the RuvAB complex. RuvB forms 2 homohexamers on either side of HJ DNA bound by 1 or 2 RuvA tetramers; 4 subunits per hexamer contact DNA at a time. Coordinated motions by a converter formed by DNA-disengaged RuvB subunits stimulates ATP hydrolysis and nucleotide exchange. Immobilization of the converter enables RuvB to convert the ATP-contained energy into a lever motion, pulling 2 nucleotides of DNA out of the RuvA tetramer per ATP hydrolyzed, thus driving DNA branch migration. The RuvB motors rotate together with the DNA substrate, which together with the progressing nucleotide cycle form the mechanistic basis for DNA recombination by continuous HJ branch migration. Branch migration allows RuvC to scan DNA until it finds its consensus sequence, where it cleaves and resolves cruciform DNA. This chain is Holliday junction branch migration complex subunit RuvB, found in Geobacter metallireducens (strain ATCC 53774 / DSM 7210 / GS-15).